A 166-amino-acid polypeptide reads, in one-letter code: Small ribosomal subunit protein uS5 (166 aa).

An S5 DRBM domain is found at 11 to 74; sequence LIEKLVSVKR…ENAKKNMVSV (64 aa).

It belongs to the universal ribosomal protein uS5 family. Part of the 30S ribosomal subunit. Contacts proteins S4 and S8.

Functionally, with S4 and S12 plays an important role in translational accuracy. Located at the back of the 30S subunit body where it stabilizes the conformation of the head with respect to the body. The protein is Small ribosomal subunit protein uS5 of Francisella tularensis subsp. tularensis (strain FSC 198).